Here is a 157-residue protein sequence, read N- to C-terminus: Protein-export protein SecB (157 aa).

Belongs to the SecB family. As to quaternary structure, homotetramer, a dimer of dimers. One homotetramer interacts with 1 SecA dimer.

It is found in the cytoplasm. Its function is as follows. One of the proteins required for the normal export of preproteins out of the cell cytoplasm. It is a molecular chaperone that binds to a subset of precursor proteins, maintaining them in a translocation-competent state. It also specifically binds to its receptor SecA. The sequence is that of Protein-export protein SecB from Shewanella oneidensis (strain ATCC 700550 / JCM 31522 / CIP 106686 / LMG 19005 / NCIMB 14063 / MR-1).